A 1274-amino-acid chain; its full sequence is DENN domain-containing protein 5B (1274 aa).

Residue serine 2 is modified to N-acetylserine. The uDENN domain occupies 39–244 (DELAGENFDQ…EVPLPPPGRS (206 aa)). 2 positions are modified to phosphoserine: serine 49 and serine 178. A cDENN domain is found at 263–399 (ELPLSDYPLR…VDFIQELSEV (137 aa)). Positions 401 to 581 (VQFGIPPEGS…DNKIMSQWEE (181 aa)) constitute a dDENN domain. Residues 772-932 (LEENTLIASL…DYFCFTSVFT (161 aa)) enclose the RUN 1 domain. Serine 822 is modified (phosphoserine). Residues 916 to 936 (LLSLNAVDYFCFTSVFTTIMI) form a helical membrane-spanning segment. The region spanning 936–1044 (IPYRSVIIPI…DDGSLERILI (109 aa)) is the PLAT domain. The residue at position 1062 (threonine 1062) is a Phosphothreonine. 3 positions are modified to phosphoserine: serine 1068, serine 1076, and serine 1079. The RUN 2 domain occupies 1118–1267 (TVLLCGENGL…QDFTIVLEGS (150 aa)).

It belongs to the RAB6IP1 family.

It localises to the membrane. In terms of biological role, guanine nucleotide exchange factor (GEF) which may activate RAB39A and/or RAB39B. Promotes the exchange of GDP to GTP, converting inactive GDP-bound Rab proteins into their active GTP-bound form. The polypeptide is DENN domain-containing protein 5B (DENND5B) (Homo sapiens (Human)).